Reading from the N-terminus, the 593-residue chain is Serine/threonine-protein kinase SSN3 (593 aa).

One can recognise a Protein kinase domain in the interval 90–489 (YEIIGYIAAG…AIDALDHVYF (400 aa)). Residue 96-104 (IAAGTYGKV) participates in ATP binding. The tract at residues 161-199 (KPSHKRFTPPNNSNSTQIRSNSGSETNVRINSSSITNNS) is disordered. Polar residues predominate over residues 169 to 185 (PPNNSNSTQIRSNSGSE). The span at 186-199 (TNVRINSSSITNNS) shows a compositional bias: low complexity. An ATP-binding site is contributed by Lys211. The Proton acceptor role is filled by Asp312. Disordered regions lie at residues 517 to 551 (DNDITNVGNDNNQANHSQKQPMHGNNNNKNGNMNG) and 569 to 593 (AAVSGNGNNPTSNTATGGSARKKRK). Residues 518 to 536 (NDITNVGNDNNQANHSQKQ) show a composition bias toward polar residues. Residues 540–551 (GNNNNKNGNMNG) show a composition bias toward low complexity. The segment covering 573–585 (GNGNNPTSNTATG) has biased composition (polar residues).

It belongs to the protein kinase superfamily. CMGC Ser/Thr protein kinase family. CDC2/CDKX subfamily. As to quaternary structure, component of the SRB8-11 complex, a regulatory module of the Mediator complex. Requires Mg(2+) as cofactor.

The protein localises to the nucleus. The catalysed reaction is L-seryl-[protein] + ATP = O-phospho-L-seryl-[protein] + ADP + H(+). It catalyses the reaction L-threonyl-[protein] + ATP = O-phospho-L-threonyl-[protein] + ADP + H(+). It carries out the reaction [DNA-directed RNA polymerase] + ATP = phospho-[DNA-directed RNA polymerase] + ADP + H(+). Its function is as follows. Component of the SRB8-11 complex. The SRB8-11 complex is a regulatory module of the Mediator complex which is itself involved in regulation of basal and activated RNA polymerase II-dependent transcription. The SRB8-11 complex may be involved in the transcriptional repression of a subset of genes regulated by Mediator. It may inhibit the association of the Mediator complex with RNA polymerase II to form the holoenzyme complex. The SRB8-11 complex phosphorylates the C-terminal domain (CTD) of the largest subunit of RNA polymerase II. The polypeptide is Serine/threonine-protein kinase SSN3 (SSN3) (Kluyveromyces lactis (strain ATCC 8585 / CBS 2359 / DSM 70799 / NBRC 1267 / NRRL Y-1140 / WM37) (Yeast)).